We begin with the raw amino-acid sequence, 142 residues long: Hemoglobin subunit alpha-1 (142 aa).

Serine 1 bears the N-acetylserine mark. A Globin domain is found at 1–142; that stretch reads SLSVKDKAAV…VALALAERYR (142 aa). Histidine 59 provides a ligand contact to O2. Residue histidine 88 coordinates heme b.

Belongs to the globin family. As to quaternary structure, hb 1 is a heterotetramer of two alpha-1 and two beta-1 chains. As to expression, red blood cells.

Involved in oxygen transport from gills to the various peripheral tissues. The polypeptide is Hemoglobin subunit alpha-1 (hba1) (Gobionotothen gibberifrons (Humped rockcod)).